The following is a 327-amino-acid chain: Taste receptor type 2 member 102 (327 aa).

Residues 1 to 7 lie on the Extracellular side of the membrane; sequence MEPVIYS. A helical transmembrane segment spans residues 8–28; that stretch reads FATLLIHVEFIFGNLSNGFIV. Over 29-46 the chain is Cytoplasmic; sequence LSNFWDWVIKRKLSTIDK. A helical membrane pass occupies residues 47-67; the sequence is ILLTLAISRITLIWEIYTWFT. The Extracellular portion of the chain corresponds to 68-87; that stretch reads SVYGPSSFAIGMKLQILYFT. A helical transmembrane segment spans residues 88–108; the sequence is WILSSHFSLWFATALSIFYLL. Residues 109 to 124 lie on the Cytoplasmic side of the membrane; it reads RIANCSWKIFLYLKWR. The helical transmembrane segment at 125 to 145 threads the bilayer; that stretch reads LKQVIVGMLLASLVFLPGILT. At 146–179 the chain is on the extracellular side; that stretch reads QRTLEERPYRYGGNTSEDSMETDFARFTELILFN. 2 N-linked (GlcNAc...) asparagine glycosylation sites follow: N159 and N179. The chain crosses the membrane as a helical span at residues 180–200; that stretch reads LTIFSVIPFSLASISFLLLIF. Residues 201 to 229 lie on the Cytoplasmic side of the membrane; the sequence is SLWKHLRKMQLSSRGHGDPSTKAHTNALR. A helical transmembrane segment spans residues 230–250; sequence IMVSFLLLYSIYFLSLLLSWI. The Extracellular segment spans residues 251–260; that stretch reads AQKHHSKLVD. The chain crosses the membrane as a helical span at residues 261–281; sequence IIGIITGLMYPSAHSFILILG. Over 282 to 327 the chain is Cytoplasmic; that stretch reads NSKLMQTSLWILSHLRCRLKGENILNPSGNQVTSCYIFCIANKSVS.

Belongs to the G-protein coupled receptor T2R family.

The protein localises to the membrane. Putative taste receptor which may play a role in the perception of bitterness. The sequence is that of Taste receptor type 2 member 102 from Rattus norvegicus (Rat).